The primary structure comprises 622 residues: MSSEHKRSLPAVTLAAIGVVYGDIGTSPLYTLRECLSGQFGFGVEPHSVFGFLSLIFWLLVLVVSLKYLTYVMRADNAGEGGILTLMSLAGRNTSDRMTSVLVIMGLIGGSFFYGEVVITPAISVMSAMEGLEIAAPAMDSYIVPLSIVVLTLLFIIQKHGTGSVGKLFAPVMLIWFLTLGVLGVRGIIANPEVLQALNPMYAVRFFIEYKAVSFFALGAVVLAITGVEALYADMGHFGKFPIRLAWFTVVLPSLVLNYFGQGALLLKNPEAIKNPFFLLAPDWALIPLMVLATLATVIASQAVISGVFSLTRQAVRLGYLPPMRIVHTSDMESGQIYIPAINWMLYIAVVIVIVSFEHSSNLAAAYGIAVTGTMVITSILFCTVAVKNWLWNRYLAWVLLVGLLIIDVPMFLANVVKILSGGWLPLALGMVMFIIMTTWKSERFRLLRRLHEHGNSLDAMIASLEKSPPTRVPGTAVYFSRATRVIPFALLHNLKHNKILHERVVLLTMRTEDAPYVLNARRVTVEQLSPTFWRVIANYGWRETPDVEEVFQRCWQEGLTCQMMETSFFMSNESLIIGERPWYLRLRGKLFMMLSRNALRAADQFEIPPNRLIELGIQVEI.

Helical transmembrane passes span 9 to 29 (LPAVTLAAIGVVYGDIGTSPL), 49 to 69 (VFGFLSLIFWLLVLVVSLKYL), 101 to 121 (VLVIMGLIGGSFFYGEVVITP), 137 to 157 (PAMDSYIVPLSIVVLTLLFII), 165 to 185 (VGKLFAPVMLIWFLTLGVLGV), 212 to 232 (AVSFFALGAVVLAITGVEALY), 247 to 267 (WFTVVLPSLVLNYFGQGALLL), 276 to 296 (PFFLLAPDWALIPLMVLATLA), 337 to 357 (IYIPAINWMLYIAVVIVIVSF), 363 to 383 (LAAAYGIAVTGTMVITSILFC), 397 to 417 (AWVLLVGLLIIDVPMFLANVV), and 419 to 439 (ILSGGWLPLALGMVMFIIMTT).

Belongs to the HAK/KUP transporter (TC 2.A.72) family.

Its subcellular location is the cell inner membrane. It catalyses the reaction K(+)(in) + H(+)(in) = K(+)(out) + H(+)(out). In terms of biological role, responsible for the low-affinity transport of potassium into the cell. Likely operates as a K(+):H(+) symporter. This chain is Low affinity potassium transport system protein Kup, found in Pectobacterium atrosepticum (strain SCRI 1043 / ATCC BAA-672) (Erwinia carotovora subsp. atroseptica).